Here is a 253-residue protein sequence, read N- to C-terminus: Glucosamine-6-phosphate deaminase (253 aa).

Aspartate 65 acts as the Proton acceptor; for enolization step in catalysis. Asparagine 133 serves as the catalytic For ring-opening step. Catalysis depends on histidine 135, which acts as the Proton acceptor; for ring-opening step. The active-site For ring-opening step is glutamate 140.

This sequence belongs to the glucosamine/galactosamine-6-phosphate isomerase family. NagB subfamily.

It carries out the reaction alpha-D-glucosamine 6-phosphate + H2O = beta-D-fructose 6-phosphate + NH4(+). It functions in the pathway amino-sugar metabolism; N-acetylneuraminate degradation; D-fructose 6-phosphate from N-acetylneuraminate: step 5/5. Catalyzes the reversible isomerization-deamination of glucosamine 6-phosphate (GlcN6P) to form fructose 6-phosphate (Fru6P) and ammonium ion. This Corynebacterium glutamicum (strain ATCC 13032 / DSM 20300 / JCM 1318 / BCRC 11384 / CCUG 27702 / LMG 3730 / NBRC 12168 / NCIMB 10025 / NRRL B-2784 / 534) protein is Glucosamine-6-phosphate deaminase.